Reading from the N-terminus, the 463-residue chain is Argininosuccinate lyase (463 aa).

Belongs to the lyase 1 family. Argininosuccinate lyase subfamily.

It is found in the cytoplasm. The catalysed reaction is 2-(N(omega)-L-arginino)succinate = fumarate + L-arginine. It participates in amino-acid biosynthesis; L-arginine biosynthesis; L-arginine from L-ornithine and carbamoyl phosphate: step 3/3. This is Argininosuccinate lyase from Bacillus cereus (strain AH187).